The chain runs to 289 residues: Phytoene synthase (289 aa).

It belongs to the phytoene/squalene synthase family. ATP is required as a cofactor. The cofactor is Mn(2+). It depends on Mg(2+) as a cofactor.

The protein operates within carotenoid biosynthesis; phytoene biosynthesis. Functionally, involved in the biosynthesis of carotenoids. Catalyzes the condensation of two molecules of geranylgeranyl diphosphate (GGPP) to give prephytoene diphosphate (PPPP) and the subsequent rearrangement of the cyclopropylcarbinyl intermediate to yield phytoene. In Thermus thermophilus (strain ATCC BAA-163 / DSM 7039 / HB27), this protein is Phytoene synthase (crtB).